The following is a 246-amino-acid chain: Probable transcriptional regulatory protein AHA_1522 (246 aa).

It belongs to the TACO1 family.

Its subcellular location is the cytoplasm. This is Probable transcriptional regulatory protein AHA_1522 from Aeromonas hydrophila subsp. hydrophila (strain ATCC 7966 / DSM 30187 / BCRC 13018 / CCUG 14551 / JCM 1027 / KCTC 2358 / NCIMB 9240 / NCTC 8049).